A 414-amino-acid chain; its full sequence is MQSWYCPPVPVLPGRGPQLRLYDSADRQVRPVAPGSKATMYVCGITPYDATHLGHAATYVTFDLIHRLWLDLGHELHYVQNITDIDDPLFERADRDGVDWRDLAQAEVALFCEDMAALRVLPPQDYVGATEAIAEMVELIEKMLACGAAYVIDREMGEYQDIYFRADATLQFGYESGYDRDTMLRLCEERGGDPRRPGKSDELDALLWRAARPGEPSWPSPFGPGRPGWHVECAAIALSRIGSGLDIQGGGSDLIFPHHEFTAAHAECVSGERRFARHYVHAGMIGWDGHKMSKSRGNLVLVSALRAQDVEPSAVRLGLLAGHYRADRFWSQQVLDEATARLHRWRTATALPAGPAAVDVVARVRRYLADDLDTPKAIAALDGWVTDAVEYGGHDAGAPKLVATAIDALLGVDL.

Cys-43 contributes to the Zn(2+) binding site. L-cysteinyl-5'-AMP-binding positions include 43–46 (CGIT), Thr-58, and 81–83 (NIT). The 'HIGH' region signature appears at 45–55 (ITPYDATHLGH). The 'ERGGDP' region motif lies at 189–194 (ERGGDP). An L-cysteinyl-5'-AMP-binding site is contributed by Trp-229. Zn(2+) is bound at residue Cys-233. 251–253 (GSD) is an L-cysteinyl-5'-AMP binding site. Residue His-258 coordinates Zn(2+). Residue Ile-285 participates in L-cysteinyl-5'-AMP binding. Residues 291 to 295 (KMSKS) carry the 'KMSKS' region motif.

The protein belongs to the class-I aminoacyl-tRNA synthetase family. MshC subfamily. In terms of assembly, monomer. Requires Zn(2+) as cofactor.

The enzyme catalyses 1D-myo-inositol 2-amino-2-deoxy-alpha-D-glucopyranoside + L-cysteine + ATP = 1D-myo-inositol 2-(L-cysteinylamino)-2-deoxy-alpha-D-glucopyranoside + AMP + diphosphate + H(+). Catalyzes the ATP-dependent condensation of GlcN-Ins and L-cysteine to form L-Cys-GlcN-Ins. This chain is L-cysteine:1D-myo-inositol 2-amino-2-deoxy-alpha-D-glucopyranoside ligase (mshC), found in Mycobacterium bovis (strain ATCC BAA-935 / AF2122/97).